The primary structure comprises 663 residues: UvrABC system protein B (663 aa).

Positions 1 to 10 (MIDKRDDKPF) are enriched in basic and acidic residues. A disordered region spans residues 1–23 (MIDKRDDKPFKLKSKYKPSGDQP). Residues 31-418 (DNIEGGEKAQ…TNTIIEQIIR (388 aa)) form the Helicase ATP-binding domain. ATP is bound at residue 44–51 (GATGTGKT). The Beta-hairpin motif lies at 97–120 (YYDYYQPEAYVPSSDTYIEKDSSV). One can recognise a Helicase C-terminal domain in the interval 435–597 (QMDDLLGEIN…IVPQTIKKDI (163 aa)). In terms of domain architecture, UVR spans 627–662 (KEAINALQKQMQEAAELLDFELAAQMRDLILELKLM).

The protein belongs to the UvrB family. Forms a heterotetramer with UvrA during the search for lesions. Interacts with UvrC in an incision complex.

The protein resides in the cytoplasm. The UvrABC repair system catalyzes the recognition and processing of DNA lesions. A damage recognition complex composed of 2 UvrA and 2 UvrB subunits scans DNA for abnormalities. Upon binding of the UvrA(2)B(2) complex to a putative damaged site, the DNA wraps around one UvrB monomer. DNA wrap is dependent on ATP binding by UvrB and probably causes local melting of the DNA helix, facilitating insertion of UvrB beta-hairpin between the DNA strands. Then UvrB probes one DNA strand for the presence of a lesion. If a lesion is found the UvrA subunits dissociate and the UvrB-DNA preincision complex is formed. This complex is subsequently bound by UvrC and the second UvrB is released. If no lesion is found, the DNA wraps around the other UvrB subunit that will check the other stand for damage. The chain is UvrABC system protein B from Streptococcus pyogenes serotype M18 (strain MGAS8232).